We begin with the raw amino-acid sequence, 143 residues long: Large ribosomal subunit protein uL11 (143 aa).

The protein belongs to the universal ribosomal protein uL11 family. Part of the ribosomal stalk of the 50S ribosomal subunit. Interacts with L10 and the large rRNA to form the base of the stalk. L10 forms an elongated spine to which L12 dimers bind in a sequential fashion forming a multimeric L10(L12)X complex. In terms of processing, one or more lysine residues are methylated.

Functionally, forms part of the ribosomal stalk which helps the ribosome interact with GTP-bound translation factors. This Caulobacter vibrioides (strain ATCC 19089 / CIP 103742 / CB 15) (Caulobacter crescentus) protein is Large ribosomal subunit protein uL11.